We begin with the raw amino-acid sequence, 573 residues long: Proline--tRNA ligase (573 aa).

This sequence belongs to the class-II aminoacyl-tRNA synthetase family. ProS type 1 subfamily. As to quaternary structure, homodimer.

The protein localises to the cytoplasm. The enzyme catalyses tRNA(Pro) + L-proline + ATP = L-prolyl-tRNA(Pro) + AMP + diphosphate. In terms of biological role, catalyzes the attachment of proline to tRNA(Pro) in a two-step reaction: proline is first activated by ATP to form Pro-AMP and then transferred to the acceptor end of tRNA(Pro). As ProRS can inadvertently accommodate and process non-cognate amino acids such as alanine and cysteine, to avoid such errors it has two additional distinct editing activities against alanine. One activity is designated as 'pretransfer' editing and involves the tRNA(Pro)-independent hydrolysis of activated Ala-AMP. The other activity is designated 'posttransfer' editing and involves deacylation of mischarged Ala-tRNA(Pro). The misacylated Cys-tRNA(Pro) is not edited by ProRS. The sequence is that of Proline--tRNA ligase from Cupriavidus taiwanensis (strain DSM 17343 / BCRC 17206 / CCUG 44338 / CIP 107171 / LMG 19424 / R1) (Ralstonia taiwanensis (strain LMG 19424)).